Reading from the N-terminus, the 359-residue chain is Peptide chain release factor 1 (359 aa).

Residue Q234 is modified to N5-methylglutamine.

The protein belongs to the prokaryotic/mitochondrial release factor family. Methylated by PrmC. Methylation increases the termination efficiency of RF1.

It is found in the cytoplasm. Functionally, peptide chain release factor 1 directs the termination of translation in response to the peptide chain termination codons UAG and UAA. The sequence is that of Peptide chain release factor 1 from Clavibacter michiganensis subsp. michiganensis (strain NCPPB 382).